The following is a 389-amino-acid chain: Dirigent protein 25 (389 aa).

A signal peptide spans 1–21; sequence MAGCKVLFFLILALAITFVSA. Composition is skewed to low complexity over residues 50-68, 77-86, and 98-135; these read GPFPTANSGPATGIASGTG, LGTNTGPGPL, and SSGTLPVTGPGPLPTSSGLLPGASSGNLPGSGSGPLPT. Residues 50–135 form a disordered region; sequence GPFPTANSGP…PGSGSGPLPT (86 aa).

Belongs to the plant dirigent protein family. Homodimer.

It localises to the secreted. It is found in the extracellular space. The protein resides in the apoplast. Its function is as follows. Dirigent proteins impart stereoselectivity on the phenoxy radical-coupling reaction, yielding optically active lignans from two molecules of coniferyl alcohol in the biosynthesis of lignans, flavonolignans, and alkaloids and thus plays a central role in plant secondary metabolism. The chain is Dirigent protein 25 (DIR25) from Arabidopsis thaliana (Mouse-ear cress).